The chain runs to 370 residues: Cobalt-precorrin-5B C(1)-methyltransferase (370 aa).

The protein belongs to the CbiD family.

The enzyme catalyses Co-precorrin-5B + S-adenosyl-L-methionine = Co-precorrin-6A + S-adenosyl-L-homocysteine. Its pathway is cofactor biosynthesis; adenosylcobalamin biosynthesis; cob(II)yrinate a,c-diamide from sirohydrochlorin (anaerobic route): step 6/10. In terms of biological role, catalyzes the methylation of C-1 in cobalt-precorrin-5B to form cobalt-precorrin-6A. The chain is Cobalt-precorrin-5B C(1)-methyltransferase from Trichormus variabilis (strain ATCC 29413 / PCC 7937) (Anabaena variabilis).